A 616-amino-acid polypeptide reads, in one-letter code: Cleavage stimulation factor subunit 2 tau variant (616 aa).

In terms of domain architecture, RRM spans 16 to 94 (RSVFVGNIPY…RALRVDNAAS (79 aa)). Disordered stretches follow at residues 203 to 241 (GKSQSVSVSGPGPGPGPGLCPGPNVLLNQQNPPAPQPQH) and 262 to 418 (IPAP…SRAM). 2 stretches are compositionally biased toward low complexity: residues 223 to 233 (PGPNVLLNQQN) and 319 to 331 (VTPGGLPPRGLLG). Threonine 320 carries the post-translational modification Phosphothreonine. The span at 368-381 (SGHDTRGPSSHEMR) shows a compositional bias: basic and acidic residues. The 1-1 repeat unit spans residues 418–422 (METRA). A 9 X 5 AA tandem repeats of M-E-T-R-[AG] region spans residues 418–462 (METRAMETEVLETRVMERRGMETCAMETRGMEARGMDARGLEMRG). The 1-2; approximate repeat unit spans residues 423–427 (METEV). The stretch at 428–432 (LETRV) is one 1-3; approximate repeat. The 1-4; approximate repeat unit spans residues 433 to 437 (MERRG). A 1-5; approximate repeat occupies 438–442 (METCA). One copy of the 1-6 repeat lies at 443–447 (METRG). The stretch at 448-452 (MEARG) is one 1-7; approximate repeat. One copy of the 1-8; approximate repeat lies at 453-457 (MDARG). A 1-9; approximate repeat occupies 458 to 462 (LEMRG). Repeat copies occupy residues 505 to 509 (GAGMQ), 510 to 514 (GTGIQ), 515 to 519 (GTGMQ), and 520 to 524 (GAGIQ). Residues 505–549 (GAGMQGTGIQGTGMQGAGIQGGGMQGAGIQGVSIQGGGIQGGGIQ) are 9 X 5 AA tandem repeats of G-[AT]-G-[MI]-Q. The stretch at 525–529 (GGGMQ) is one 2-5; approximate repeat. A 2-6 repeat occupies 530–534 (GAGIQ). Residues 535-539 (GVSIQ) form a 2-7; approximate repeat. A 2-8; approximate repeat occupies 540–544 (GGGIQ). A disordered region spans residues 542-573 (GIQGGGIQGASKQGGSQPSSFSPGQSQVTPQD). One copy of the 2-9; approximate repeat lies at 545–549 (GGGIQ). The span at 550 to 568 (GASKQGGSQPSSFSPGQSQ) shows a compositional bias: low complexity. At serine 563 the chain carries Phosphoserine.

Its subcellular location is the nucleus. May play a significant role in AAUAAA-independent mRNA polyadenylation in germ cells. Directly involved in the binding to pre-mRNAs. This Homo sapiens (Human) protein is Cleavage stimulation factor subunit 2 tau variant (CSTF2T).